Here is a 333-residue protein sequence, read N- to C-terminus: Mitochondrial glycine transporter (333 aa).

The tract at residues 1-25 (MTNAATDKSVASVARDVSTGKPGKS) is disordered. 3 Solcar repeats span residues 26-109 (PDAA…MRAA), 127-220 (LLPM…FKND), and 236-319 (RSSV…LIKS). 6 consecutive transmembrane segments (helical) span residues 32 to 57 (LLSGGLAGLTSAVTLQPFDLLKTRLQ), 84 to 110 (GAVPSALRTSVGAGLYFTTLSKMRAAV), 133 to 158 (LATGFVARAIVGYITMPITMVKTRFE), 195 to 218 (GSVATLARDCPYAGLYVLFYEGFK), 240 to 266 (INSSSAILAASVSTTITAPFDAIKTRL), and 294 to 312 (GLSLRFGRKALSAGISWCI).

It belongs to the mitochondrial carrier (TC 2.A.29) family. SLC25A38 subfamily.

It localises to the mitochondrion inner membrane. The catalysed reaction is glycine(in) = glycine(out). Mitochondrial glycine transporter that imports glycine into the mitochondrial matrix. Plays an important role in providing glycine for the first enzymatic step in heme biosynthesis, the condensation of glycine with succinyl-CoA to produce 5-aminolevulinate (ALA) in the mitochondrial matrix. This Scheffersomyces stipitis (strain ATCC 58785 / CBS 6054 / NBRC 10063 / NRRL Y-11545) (Yeast) protein is Mitochondrial glycine transporter.